A 327-amino-acid polypeptide reads, in one-letter code: DNA polymerase III subunit delta' (327 aa).

As to quaternary structure, DNA polymerase III contains a core (composed of alpha, epsilon and theta chains) that associates with a tau subunit. This core dimerizes to form the POLIII' complex. PolIII' associates with the gamma complex (composed of gamma, delta, delta', psi and chi chains) and with the beta chain to form the complete DNA polymerase III complex.

The enzyme catalyses DNA(n) + a 2'-deoxyribonucleoside 5'-triphosphate = DNA(n+1) + diphosphate. Its function is as follows. DNA polymerase III is a complex, multichain enzyme responsible for most of the replicative synthesis in bacteria. This DNA polymerase also exhibits 3' to 5' exonuclease activity. The chain is DNA polymerase III subunit delta' (holB) from Haemophilus influenzae (strain ATCC 51907 / DSM 11121 / KW20 / Rd).